A 326-amino-acid polypeptide reads, in one-letter code: Ras association domain-containing protein 2 (326 aa).

One can recognise a Ras-associating domain in the interval Tyr-176 to Gln-264. One can recognise an SARAH domain in the interval Val-272–Ile-319.

In terms of assembly, interacts directly with activated KRAS in a GTP-dependent manner. Interacts (via SARAH domain) with STK3/MST2 and STK4/MST1. Phosphorylated by STK3/MST2 and STK4/MST1.

Its subcellular location is the nucleus. It localises to the cytoplasm. The protein resides in the chromosome. It is found in the centromere. The protein localises to the kinetochore. In terms of biological role, potential tumor suppressor. Acts as a KRAS-specific effector protein. May promote apoptosis and cell cycle arrest. Stabilizes STK3/MST2 by protecting it from proteasomal degradation. In Rattus norvegicus (Rat), this protein is Ras association domain-containing protein 2 (Rassf2).